Reading from the N-terminus, the 255-residue chain is uncharacterized protein (255 aa).

The next 2 helical transmembrane spans lie at 99 to 119 and 146 to 166; these read ISLIYLLTVGMLINVCVITSF and YIGSAFITPALYFTLTLILFL.

Its subcellular location is the mitochondrion membrane. This is an uncharacterized protein from Schizosaccharomyces pombe (strain 972 / ATCC 24843) (Fission yeast).